We begin with the raw amino-acid sequence, 331 residues long: Methionyl-tRNA formyltransferase (331 aa).

111 to 114 (SLLP) provides a ligand contact to (6S)-5,6,7,8-tetrahydrofolate.

The protein belongs to the Fmt family.

It carries out the reaction L-methionyl-tRNA(fMet) + (6R)-10-formyltetrahydrofolate = N-formyl-L-methionyl-tRNA(fMet) + (6S)-5,6,7,8-tetrahydrofolate + H(+). Its function is as follows. Attaches a formyl group to the free amino group of methionyl-tRNA(fMet). The formyl group appears to play a dual role in the initiator identity of N-formylmethionyl-tRNA by promoting its recognition by IF2 and preventing the misappropriation of this tRNA by the elongation apparatus. In Thermosynechococcus vestitus (strain NIES-2133 / IAM M-273 / BP-1), this protein is Methionyl-tRNA formyltransferase.